The sequence spans 370 residues: Peptide chain release factor 2 (370 aa).

Position 252 is an N5-methylglutamine (Gln-252).

It belongs to the prokaryotic/mitochondrial release factor family. In terms of processing, methylated by PrmC. Methylation increases the termination efficiency of RF2.

The protein localises to the cytoplasm. In terms of biological role, peptide chain release factor 2 directs the termination of translation in response to the peptide chain termination codons UGA and UAA. The protein is Peptide chain release factor 2 of Mycobacterium avium (strain 104).